The chain runs to 763 residues: MTISPPEREAKVKATVDKNPVPTSFEKWGKPGHFDRTLAKGPKTTTWIWNLHANAHDFDSHTSDLEDISRKIFSAHFGHLAVIFIWLSGAYFHGARFSNFSGWLADPTHVKPSAQVVWPIFGQEILNGDVGGGFHGIQITSGLFQLWRASGYTNEFQLYVTAIGALVMAGLMLFAGWFHYHKAAPKLEWFQNVESMLNHHLAGLLGLGSLSWAGHQIHVSLPVNKLLDAIDAGEPLVLNGKTIASAADIPLPHEFLDVSLISQLFPGFEAGVKAFFTLNWSAYADFLTFKGGLNPVTGGLWLTDTAHHHLAIAVLFIVAGHMYRTNWGIGHSLKEILEAHKGPFTGQGHKGLYEILTTSWHAQLSINLAILGSISIIVAHHMYAMPPYPYLATDYPTMLSLFTHHIWIGGFLIVGAGAHAAIFMVRDYDPAKNVDNLLDRVLRHRDAIISHLNWVCIWLGFHSFGLYIHNDTMRALGRPQDMFSDSAIQLQPIFAQWIQNIHALAPGNTAPNALASVSQVFGGDVVAVGGKVAAAPIVLGTADFMVHHIHAFTIHVTALILLKGVLYARSSRLVPDKANLGFRFPCDGPGRGGTCQVSGWDHVFLGLFWMYNSLSIVIFHYSWKMQSDVWGSVLPDGSVAHIANGNFAQSALTINGWLRDFLWAQASQVITSYGSSTSAYGLLFLGAHFVWAFSLMFLFSGRGYWQELIESIVWAHNKLKVAPAIQPRALSIIQGRAVGVAHYLLGGIVTTWSFFLARIIAVG.

Helical transmembrane passes span 72–95, 158–181, 197–221, 305–323, 360–383, 399–425, 447–469, and 544–562; these read IFSA…FHGA, LYVT…FHYH, LNHH…HVSL, TAHH…GHMY, WHAQ…HHMY, LSLF…IFMV, AIIS…LYIH, and FMVH…LILL. [4Fe-4S] cluster contacts are provided by Cys586 and Cys595. Transmembrane regions (helical) follow at residues 602-623 and 677-699; these read HVFL…HYSW and TSAY…MFLF. His688 serves as a coordination point for chlorophyll a'. Positions 696 and 704 each coordinate chlorophyll a. A phylloquinone-binding site is contributed by Trp705. The helical transmembrane segment at 737-757 threads the bilayer; the sequence is AVGVAHYLLGGIVTTWSFFLA.

This sequence belongs to the PsaA/PsaB family. As to quaternary structure, the PsaA/B heterodimer binds the P700 chlorophyll special pair and subsequent electron acceptors. PSI consists of a core antenna complex that captures photons, and an electron transfer chain that converts photonic excitation into a charge separation. The cyanobacterial PSI reaction center is composed of one copy each of PsaA,B,C,D,E,F,I,J,K,L,M and X, and forms trimeric complexes. PSI electron transfer chain: 5 chlorophyll a, 1 chlorophyll a', 2 phylloquinones and 3 4Fe-4S clusters. PSI core antenna: 90 chlorophyll a, 22 carotenoids, 3 phospholipids and 1 galactolipid. P700 is a chlorophyll a/chlorophyll a' dimer, A0 is one or more chlorophyll a, A1 is one or both phylloquinones and FX is a shared 4Fe-4S iron-sulfur center. serves as cofactor.

The protein localises to the cellular thylakoid membrane. It carries out the reaction reduced [plastocyanin] + hnu + oxidized [2Fe-2S]-[ferredoxin] = oxidized [plastocyanin] + reduced [2Fe-2S]-[ferredoxin]. PsaA and PsaB bind P700, the primary electron donor of photosystem I (PSI), as well as the electron acceptors A0, A1 and FX. PSI is a plastocyanin/cytochrome c6-ferredoxin oxidoreductase, converting photonic excitation into a charge separation, which transfers an electron from the donor P700 chlorophyll pair to the spectroscopically characterized acceptors A0, A1, FX, FA and FB in turn. Oxidized P700 is reduced on the lumenal side of the thylakoid membrane by plastocyanin or cytochrome c6. The sequence is that of Photosystem I P700 chlorophyll a apoprotein A1 from Synechococcus elongatus (strain ATCC 33912 / PCC 7942 / FACHB-805) (Anacystis nidulans R2).